Here is a 464-residue protein sequence, read N- to C-terminus: UPF0210 protein Cgl1545/cg1743 (464 aa).

Belongs to the UPF0210 family. In terms of assembly, homodimer.

This is UPF0210 protein Cgl1545/cg1743 from Corynebacterium glutamicum (strain ATCC 13032 / DSM 20300 / JCM 1318 / BCRC 11384 / CCUG 27702 / LMG 3730 / NBRC 12168 / NCIMB 10025 / NRRL B-2784 / 534).